Reading from the N-terminus, the 247-residue chain is Carboxy-S-adenosyl-L-methionine synthase (247 aa).

S-adenosyl-L-methionine contacts are provided by residues tyrosine 40, 65-67 (GAS), 90-91 (DN), 122-123 (DI), asparagine 137, and arginine 204.

The protein belongs to the class I-like SAM-binding methyltransferase superfamily. Cx-SAM synthase family. In terms of assembly, homodimer.

It carries out the reaction prephenate + S-adenosyl-L-methionine = carboxy-S-adenosyl-L-methionine + 3-phenylpyruvate + H2O. Catalyzes the conversion of S-adenosyl-L-methionine (SAM) to carboxy-S-adenosyl-L-methionine (Cx-SAM). The polypeptide is Carboxy-S-adenosyl-L-methionine synthase (Pseudomonas putida (strain GB-1)).